The following is a 389-amino-acid chain: Gustatory receptor 68a (389 aa).

Residues 1–42 (MKIYQDIYPISKPSQIFAILPFYSGDVDDGFRFGGLGRWYGR) are Cytoplasmic-facing. A helical membrane pass occupies residues 43–63 (LVALIILIGSLTLGEDVLFAS). The Extracellular portion of the chain corresponds to 64–82 (KEYRLVASAQGDTEEINRT). An N-linked (GlcNAc...) asparagine glycan is attached at Asn-80. Residues 83–103 (IETLLCIISYTMVVLSSVQNA) traverse the membrane as a helical segment. Topologically, residues 104–133 (SRHFRTLHDIAKIDEYLLANGFRETYSCRN) are cytoplasmic. Residues 134 to 154 (LTILVTSAAGGVLAVAFYYIH) form a helical membrane-spanning segment. Residues 155–164 (YRSGIGAKRQ) are Extracellular-facing. Residues 165–185 (IILLLIYFLQLLYSTLLALYL) traverse the membrane as a helical segment. The Cytoplasmic portion of the chain corresponds to 186 to 236 (RTLMMNLAQRIGFLNQKLDTFNLQDCGHMENWRELSNLIEVLCKFRYITEN). Residues 237–257 (INCVAGVSLLFYFGFSFYTVT) traverse the membrane as a helical segment. Asn-258 is a glycosylation site (N-linked (GlcNAc...) asparagine). At 258–281 (NQSYLAFATLTAGSLSSKTEVADT) the chain is on the extracellular side. Residues 282–302 (IGLSCIWVLAETITMIVICSA) form a helical membrane-spanning segment. The Cytoplasmic portion of the chain corresponds to 303 to 352 (CDGLASEVNGTAQILARIYGKSKQFQNLIDKFLTKSIKQDLQFTAYGFFS). A helical membrane pass occupies residues 353-373 (IDNSTLFKIFSAVTTYLVILI). Residues 374–389 (QFKQLEDSKVEDISQA) lie on the Extracellular side of the membrane.

The protein belongs to the insect chemoreceptor superfamily. Gustatory receptor (GR) family. Gr21a subfamily. As to expression, expressed in chemosensory neurons of about 20 male-specific gustatory bristles in the forelegs. No expression is seen in the mechanosensory neurons. In larvae, expressed in the ventral pharyngeal sense organ.

It is found in the cell membrane. In terms of biological role, dsx-dependent essential component of pheromone-driven courtship behavior. Recognizes a female pheromone involved in the second step (tapping step) of the courtship display which is essential for efficient execution of the entire courtship sequence and timely mating. Required for detection of the male sex pheromone CH503 which is transferred from males to females during mating and inhibits courtship behavior by other males. Gr68a-expressing neurons in the male foreleg relay signals to the suboesophageal zone (SEZ) and courtship suppression is mediated by the release of the neuropeptide tachykinin from a cluster of 8-10 neurons in the SEZ. The sequence is that of Gustatory receptor 68a (Gr68a) from Drosophila melanogaster (Fruit fly).